The following is a 68-amino-acid chain: Sec-independent protein translocase protein TatA (68 aa).

Residues 1–21 (MGSFSIWHWLIVLAVVLLLFG) form a helical membrane-spanning segment. A disordered region spans residues 42–68 (GMGDDEVASADKSVDGKTVDHKSDEVR). Basic and acidic residues predominate over residues 53 to 68 (KSVDGKTVDHKSDEVR).

This sequence belongs to the TatA/E family. In terms of assembly, the Tat system comprises two distinct complexes: a TatABC complex, containing multiple copies of TatA, TatB and TatC subunits, and a separate TatA complex, containing only TatA subunits. Substrates initially bind to the TatABC complex, which probably triggers association of the separate TatA complex to form the active translocon.

The protein localises to the cell inner membrane. Functionally, part of the twin-arginine translocation (Tat) system that transports large folded proteins containing a characteristic twin-arginine motif in their signal peptide across membranes. TatA could form the protein-conducting channel of the Tat system. The chain is Sec-independent protein translocase protein TatA from Rhizobium meliloti (strain 1021) (Ensifer meliloti).